The primary structure comprises 355 residues: Peptide chain release factor 1 (355 aa).

An N5-methylglutamine modification is found at Gln231.

This sequence belongs to the prokaryotic/mitochondrial release factor family. Methylated by PrmC. Methylation increases the termination efficiency of RF1.

It is found in the cytoplasm. Peptide chain release factor 1 directs the termination of translation in response to the peptide chain termination codons UAG and UAA. The polypeptide is Peptide chain release factor 1 (Aliarcobacter butzleri (strain RM4018) (Arcobacter butzleri)).